We begin with the raw amino-acid sequence, 569 residues long: Rab GTPase-binding effector protein 2 (569 aa).

Disordered stretches follow at residues 1–41, 180–265, and 388–411; these read MAAA…GELS, IQRR…ETAS, and RAEQ…ESLP. Ala2 bears the N-acetylalanine mark. The stretch at 34–187 forms a coiled coil; the sequence is EAESGELSRL…QEIQRRPRHA (154 aa). Ser189 and Ser193 each carry phosphoserine. At Ser200 the chain carries Phosphoserine; by GSK3-alpha. Ser204 bears the Phosphoserine mark. Low complexity-rich tracts occupy residues 245–257 and 393–403; these read SSSS…QGLS and PSSAPQGSQQE. Residues 289–523 are a coiled coil; it reads DTQWEQLQTE…LQAELETSEQ (235 aa).

This sequence belongs to the rabaptin family. As to quaternary structure, heterodimer with RABGEF1. The dimer binds RAB5A that has been activated by GTP-binding. Interacts with SDCCAG8; this interaction is important for ciliogenesis regulation. Interacts with RAB4A; this interaction may mediate VEGFR2 cell surface expression.

Its subcellular location is the cytoplasm. The protein localises to the early endosome. It is found in the cytoskeleton. It localises to the microtubule organizing center. The protein resides in the centrosome. Its subcellular location is the cilium basal body. Its function is as follows. Plays a role in membrane trafficking and in homotypic early endosome fusion. Participates in arteriogenesis by regulating vascular endothelial growth factor receptor 2/VEGFR2 cell surface expression and endosomal trafficking. By interacting with SDCCAG8, localizes to centrosomes and plays a critical role in ciliogenesis. The sequence is that of Rab GTPase-binding effector protein 2 (RABEP2) from Homo sapiens (Human).